We begin with the raw amino-acid sequence, 394 residues long: 4-O-methyl-glucuronoyl methylesterase (394 aa).

Residues 1–18 (MVHLTPALLLASAAFAAA) form the signal peptide. Intrachain disulfides connect cysteine 29–cysteine 63, cysteine 210–cysteine 345, and cysteine 242–cysteine 317. The GXSYXG catalytic site motif signature appears at 209-214 (GCSRNG). Catalysis depends on serine 211, which acts as the Nucleophile. Substrate-binding residues include lysine 215, glutamine 257, glutamate 265, and tryptophan 308. Histidine 344 serves as the catalytic Proton donor/acceptor.

The protein belongs to the carbohydrate esterase 15 (CE15) family.

The protein resides in the secreted. It carries out the reaction a 4-O-methyl-alpha-D-glucuronosyl ester derivative + H2O = 4-O-methyl-alpha-D-glucuronate derivative + an alcohol + H(+). Its function is as follows. Glucuronoyl esterase which may play a significant role in biomass degradation, as it is considered to disconnect hemicellulose from lignin through the hydrolysis of the ester bond between 4-O-methyl-D-glucuronic acid residues of glucuronoxylans and aromatic alcohols of lignin. The sequence is that of 4-O-methyl-glucuronoyl methylesterase from Neurospora crassa (strain ATCC 24698 / 74-OR23-1A / CBS 708.71 / DSM 1257 / FGSC 987).